Here is a 363-residue protein sequence, read N- to C-terminus: 3-isopropylmalate dehydrogenase (363 aa).

78-91 (GPKWENLPPESQPE) lines the NAD(+) pocket. 4 residues coordinate substrate: arginine 99, arginine 109, arginine 138, and aspartate 227. Mg(2+) is bound by residues aspartate 227, aspartate 251, and aspartate 255. Position 285–297 (285–297 (GSAPDIAGKNIAN)) interacts with NAD(+).

The protein belongs to the isocitrate and isopropylmalate dehydrogenases family. LeuB type 1 subfamily. Homodimer. The cofactor is Mg(2+). Requires Mn(2+) as cofactor.

The protein resides in the cytoplasm. The enzyme catalyses (2R,3S)-3-isopropylmalate + NAD(+) = 4-methyl-2-oxopentanoate + CO2 + NADH. It participates in amino-acid biosynthesis; L-leucine biosynthesis; L-leucine from 3-methyl-2-oxobutanoate: step 3/4. In terms of biological role, catalyzes the oxidation of 3-carboxy-2-hydroxy-4-methylpentanoate (3-isopropylmalate) to 3-carboxy-4-methyl-2-oxopentanoate. The product decarboxylates to 4-methyl-2 oxopentanoate. This is 3-isopropylmalate dehydrogenase from Salmonella paratyphi A (strain ATCC 9150 / SARB42).